The following is a 520-amino-acid chain: MSAMREKGDIIIGIDAGTSVLKAVAFDFSGRQIESAAVRNTYVTGDHGAVTQSLAQTWQDCARALRDLGAKLPGLAQRTAAIAVTGQGDGTWLVGKDNRPVGDAWIWLDARAASTVTRLAAGPMNRARFEATGTGLNTCQQGAQMAHMDTIAPELLDNAEAALHCKDWLYLNLTGVRATDPSEASFTFGNFRTRQYDDVVIEALGLQKRRNLLPEIIDGSQSQHPLSAEAAAATGLLAGTPVSLGYVDMAMTALGAGVCGGTAGAGCSTIGSTGVHMRAKPVADIHLNKEGTGYVIALPIPGIVTQVQTNMGATINIDWILQVAADLMSTPEKPVSLGDLIPRLDDWFNASRPGAILYHPYISEAGERGPFVNANARAGFIGLSSRDRFPELVRSVVEGLGMATRDCYAAMGEMPAELRITGGAARSKALRGTLSAAVNAPVRVSAREEAGAAGAAMMAAVAIGAYPAMDDCIAEWVEPLLGASEAPDAARAHQYEELFVAYREARLALAPVWDKLASGK.

It belongs to the FGGY kinase family.

It catalyses the reaction erythritol + ATP = D-erythritol 1-phosphate + ADP + H(+). The protein operates within carbohydrate metabolism; erythritol degradation. Catalyzes the phosphorylation of erythritol to D-erythritol-1-phosphate. The sequence is that of Erythritol kinase from Brucella abortus (strain 2308).